A 314-amino-acid polypeptide reads, in one-letter code: Ribose-phosphate pyrophosphokinase (314 aa).

ATP is bound by residues 37 to 39 (DGE) and 96 to 97 (RQ). Mg(2+) contacts are provided by His-131 and Asp-170. Lys-194 is an active-site residue. D-ribose 5-phosphate contacts are provided by residues Arg-196, Asp-220, and 224-228 (DTGGT).

The protein belongs to the ribose-phosphate pyrophosphokinase family. Class I subfamily. Homohexamer. Requires Mg(2+) as cofactor.

It is found in the cytoplasm. The catalysed reaction is D-ribose 5-phosphate + ATP = 5-phospho-alpha-D-ribose 1-diphosphate + AMP + H(+). Its pathway is metabolic intermediate biosynthesis; 5-phospho-alpha-D-ribose 1-diphosphate biosynthesis; 5-phospho-alpha-D-ribose 1-diphosphate from D-ribose 5-phosphate (route I): step 1/1. Its function is as follows. Involved in the biosynthesis of the central metabolite phospho-alpha-D-ribosyl-1-pyrophosphate (PRPP) via the transfer of pyrophosphoryl group from ATP to 1-hydroxyl of ribose-5-phosphate (Rib-5-P). In Vibrio cholerae serotype O1 (strain ATCC 39315 / El Tor Inaba N16961), this protein is Ribose-phosphate pyrophosphokinase.